The chain runs to 300 residues: 4-diphosphocytidyl-2-C-methyl-D-erythritol kinase (300 aa).

Lysine 22 is an active-site residue. 105 to 115 (PMGGGLGGGSS) is a binding site for ATP. Aspartate 147 is an active-site residue.

Belongs to the GHMP kinase family. IspE subfamily.

The enzyme catalyses 4-CDP-2-C-methyl-D-erythritol + ATP = 4-CDP-2-C-methyl-D-erythritol 2-phosphate + ADP + H(+). Its pathway is isoprenoid biosynthesis; isopentenyl diphosphate biosynthesis via DXP pathway; isopentenyl diphosphate from 1-deoxy-D-xylulose 5-phosphate: step 3/6. Catalyzes the phosphorylation of the position 2 hydroxy group of 4-diphosphocytidyl-2C-methyl-D-erythritol. The protein is 4-diphosphocytidyl-2-C-methyl-D-erythritol kinase of Colwellia psychrerythraea (strain 34H / ATCC BAA-681) (Vibrio psychroerythus).